Consider the following 104-residue polypeptide: Enhancer of rudimentary homolog (104 aa).

Serine 2 is modified (N-acetylserine). At threonine 11 the chain carries Phosphothreonine. Lysine 12 participates in a covalent cross-link: Glycyl lysine isopeptide (Lys-Gly) (interchain with G-Cter in SUMO2).

This sequence belongs to the E(R) family. As to quaternary structure, homodimer.

Its subcellular location is the nucleus. In terms of biological role, may have a role in the cell cycle. The sequence is that of Enhancer of rudimentary homolog (ERH) from Bos taurus (Bovine).